A 619-amino-acid polypeptide reads, in one-letter code: 1-deoxy-D-xylulose-5-phosphate synthase (619 aa).

Thiamine diphosphate-binding positions include histidine 74 and 115–117 (GHS). Aspartate 146 contacts Mg(2+). Residues 147–148 (GA), asparagine 175, tyrosine 285, and glutamate 365 contribute to the thiamine diphosphate site. Asparagine 175 is a binding site for Mg(2+).

It belongs to the transketolase family. DXPS subfamily. Homodimer. Mg(2+) is required as a cofactor. Thiamine diphosphate serves as cofactor.

It catalyses the reaction D-glyceraldehyde 3-phosphate + pyruvate + H(+) = 1-deoxy-D-xylulose 5-phosphate + CO2. The protein operates within metabolic intermediate biosynthesis; 1-deoxy-D-xylulose 5-phosphate biosynthesis; 1-deoxy-D-xylulose 5-phosphate from D-glyceraldehyde 3-phosphate and pyruvate: step 1/1. Catalyzes the acyloin condensation reaction between C atoms 2 and 3 of pyruvate and glyceraldehyde 3-phosphate to yield 1-deoxy-D-xylulose-5-phosphate (DXP). The polypeptide is 1-deoxy-D-xylulose-5-phosphate synthase (Clostridium perfringens (strain ATCC 13124 / DSM 756 / JCM 1290 / NCIMB 6125 / NCTC 8237 / Type A)).